We begin with the raw amino-acid sequence, 135 residues long: Ribosome-binding factor A (135 aa).

The protein belongs to the RbfA family. Monomer. Binds 30S ribosomal subunits, but not 50S ribosomal subunits or 70S ribosomes.

The protein localises to the cytoplasm. Functionally, one of several proteins that assist in the late maturation steps of the functional core of the 30S ribosomal subunit. Associates with free 30S ribosomal subunits (but not with 30S subunits that are part of 70S ribosomes or polysomes). Required for efficient processing of 16S rRNA. May interact with the 5'-terminal helix region of 16S rRNA. The protein is Ribosome-binding factor A of Rhodopseudomonas palustris (strain HaA2).